The primary structure comprises 208 residues: MAGTARHDREMAIQAKKKLTTATDPIERLRLQCLARGSAGIKGLGRVFRIMDDDNNRTLDFKEFMKGLNDYAVVMEKEEVEELFRRFDKDGNGTIDFNEFLLTLRPPMSRARKEVIMQAFRKLDKTGDGVITIEDLREVYNAKHHPKYQNGEWSEEQVFRKFLDNFDSPYDKDGLVTPEEFMNYYAGVSASIDTDVYFIIMMRTAWKL.

4 EF-hand domains span residues 39-74 (AGIKGLGRVFRIMDDDNNRTLDFKEFMKGLNDYAVV), 75-110 (MEKEEVEELFRRFDKDGNGTIDFNEFLLTLRPPMSR), 111-146 (ARKEVIMQAFRKLDKTGDGVITIEDLREVYNAKHHP), and 154-191 (SEEQVFRKFLDNFDSPYDKDGLVTPEEFMNYYAGVSAS). Ca(2+)-binding residues include Asp-52, Asp-54, Asn-56, Thr-58, Glu-63, Asp-88, Asp-90, Asn-92, Thr-94, and Glu-99.

The protein localises to the cytoplasm. This is Calcyphosin-like protein (CAPSL) from Homo sapiens (Human).